Reading from the N-terminus, the 308-residue chain is Ornithine carbamoyltransferase (308 aa).

Residues 55–58 (STRT), Q82, R106, and 133–136 (HPCQ) contribute to the carbamoyl phosphate site. Residues N164, D227, and 231 to 232 (SM) each bind L-ornithine. Carbamoyl phosphate is bound by residues 267–268 (CL) and R295.

It belongs to the aspartate/ornithine carbamoyltransferase superfamily. OTCase family.

Its subcellular location is the cytoplasm. The catalysed reaction is carbamoyl phosphate + L-ornithine = L-citrulline + phosphate + H(+). It participates in amino-acid biosynthesis; L-arginine biosynthesis; L-arginine from L-ornithine and carbamoyl phosphate: step 1/3. Its function is as follows. Reversibly catalyzes the transfer of the carbamoyl group from carbamoyl phosphate (CP) to the N(epsilon) atom of ornithine (ORN) to produce L-citrulline. This is Ornithine carbamoyltransferase from Prochlorococcus marinus (strain MIT 9312).